The primary structure comprises 70 residues: MTIIRVKENEPFEVAMRRFKRTIEKNGLLTELRAREFYEKPTAERKRKKAAAVKRHYKRIRSQTLPKKLY.

Belongs to the bacterial ribosomal protein bS21 family.

This chain is Small ribosomal subunit protein bS21A, found in Burkholderia orbicola (strain AU 1054).